Consider the following 126-residue polypeptide: Small ribosomal subunit protein uS11 (126 aa).

It belongs to the universal ribosomal protein uS11 family. Part of the 30S ribosomal subunit. Interacts with proteins S7 and S18. Binds to IF-3.

Functionally, located on the platform of the 30S subunit, it bridges several disparate RNA helices of the 16S rRNA. Forms part of the Shine-Dalgarno cleft in the 70S ribosome. The chain is Small ribosomal subunit protein uS11 from Ehrlichia chaffeensis (strain ATCC CRL-10679 / Arkansas).